Consider the following 145-residue polypeptide: D-aminoacyl-tRNA deacylase (145 aa).

Residues 137 to 138 (GP) carry the Gly-cisPro motif, important for rejection of L-amino acids motif.

The protein belongs to the DTD family. In terms of assembly, homodimer.

The protein localises to the cytoplasm. It carries out the reaction glycyl-tRNA(Ala) + H2O = tRNA(Ala) + glycine + H(+). It catalyses the reaction a D-aminoacyl-tRNA + H2O = a tRNA + a D-alpha-amino acid + H(+). Functionally, an aminoacyl-tRNA editing enzyme that deacylates mischarged D-aminoacyl-tRNAs. Also deacylates mischarged glycyl-tRNA(Ala), protecting cells against glycine mischarging by AlaRS. Acts via tRNA-based rather than protein-based catalysis; rejects L-amino acids rather than detecting D-amino acids in the active site. By recycling D-aminoacyl-tRNA to D-amino acids and free tRNA molecules, this enzyme counteracts the toxicity associated with the formation of D-aminoacyl-tRNA entities in vivo and helps enforce protein L-homochirality. This Streptomyces avermitilis (strain ATCC 31267 / DSM 46492 / JCM 5070 / NBRC 14893 / NCIMB 12804 / NRRL 8165 / MA-4680) protein is D-aminoacyl-tRNA deacylase.